We begin with the raw amino-acid sequence, 60 residues long: UPF0291 protein Nther_1806 (60 aa).

It belongs to the UPF0291 family.

The protein resides in the cytoplasm. The protein is UPF0291 protein Nther_1806 of Natranaerobius thermophilus (strain ATCC BAA-1301 / DSM 18059 / JW/NM-WN-LF).